Here is a 223-residue protein sequence, read N- to C-terminus: uncharacterized protein (223 aa).

A run of 4 helical transmembrane segments spans residues 22–42 (LTVG…FVVV), 59–79 (GVAL…ATLI), 85–105 (IFSL…WCSM), and 164–184 (MAWA…SQAF).

Belongs to the Rht family.

The protein localises to the cell membrane. This is an uncharacterized protein from Escherichia coli (strain K12).